Here is a 131-residue protein sequence, read N- to C-terminus: Small ribosomal subunit protein uS8 (131 aa).

It belongs to the universal ribosomal protein uS8 family. In terms of assembly, part of the 30S ribosomal subunit. Contacts proteins S5 and S12.

In terms of biological role, one of the primary rRNA binding proteins, it binds directly to 16S rRNA central domain where it helps coordinate assembly of the platform of the 30S subunit. The chain is Small ribosomal subunit protein uS8 from Wolbachia sp. subsp. Brugia malayi (strain TRS).